A 53-amino-acid chain; its full sequence is ATP synthase protein 8 (53 aa).

A helical transmembrane segment spans residues 9 to 29 (WLILFFIFSITLVIFNILNYF).

It belongs to the ATPase protein 8 family. As to quaternary structure, F-type ATPases have 2 components, CF(1) - the catalytic core - and CF(0) - the membrane proton channel.

Its subcellular location is the mitochondrion membrane. Mitochondrial membrane ATP synthase (F(1)F(0) ATP synthase or Complex V) produces ATP from ADP in the presence of a proton gradient across the membrane which is generated by electron transport complexes of the respiratory chain. F-type ATPases consist of two structural domains, F(1) - containing the extramembraneous catalytic core and F(0) - containing the membrane proton channel, linked together by a central stalk and a peripheral stalk. During catalysis, ATP synthesis in the catalytic domain of F(1) is coupled via a rotary mechanism of the central stalk subunits to proton translocation. Part of the complex F(0) domain. Minor subunit located with subunit a in the membrane. In Anopheles quadrimaculatus (Common malaria mosquito), this protein is ATP synthase protein 8 (mt:ATPase8).